Reading from the N-terminus, the 37-residue chain is Photosystem I reaction center subunit VIII (37 aa).

The helical transmembrane segment at L7–L27 threads the bilayer.

The protein belongs to the PsaI family.

The protein resides in the plastid. The protein localises to the chloroplast thylakoid membrane. Its function is as follows. May help in the organization of the PsaL subunit. This chain is Photosystem I reaction center subunit VIII, found in Eucalyptus globulus subsp. globulus (Tasmanian blue gum).